The following is a 209-amino-acid chain: ADP-ribose pyrophosphatase (209 aa).

Residues 28 to 29, 51 to 52, R56, and R79 contribute to the substrate site; these read FF and RE. The Nudix hydrolase domain occupies 55–193; the sequence is ERGHAAVLLP…KIDNAASVIA (139 aa). A96 lines the Mg(2+) pocket. The Nudix box signature appears at 97–118; sequence GMIEEGESVEDVARREAIEEAG. Residue M98 coordinates substrate. Mg(2+) contacts are provided by E112 and E116. Residues 133-135 and E139 contribute to the substrate site; that span reads SPG. E162 (proton acceptor) is an active-site residue. E164 contacts Mg(2+).

The protein belongs to the Nudix hydrolase family. NudF subfamily. As to quaternary structure, homodimer. It depends on Mg(2+) as a cofactor.

It catalyses the reaction ADP-D-ribose + H2O = D-ribose 5-phosphate + AMP + 2 H(+). With respect to regulation, inhibited by phosphorylated compounds such as AMP, ADP, ATP, 3-phosphoglyceric acid and PPi. Not inhibited by orthophosphate. Activity is high in cells grown in low glucose concentrations and decreases dramatically as glucose concentration increases. Functionally, acts on ADP-mannose and ADP-glucose as well as ADP-ribose. Prevents glycogen biosynthesis. The reaction catalyzed by this enzyme is a limiting step of the gluconeogenic process. In Escherichia coli O157:H7, this protein is ADP-ribose pyrophosphatase (nudF).